Reading from the N-terminus, the 326-residue chain is Transmembrane protein PVRIG (326 aa).

3 helical membrane-spanning segments follow: residues 26–46 (LVLPWVLLTLCVTAGTPEVWV), 62–78 (CGFLGSGSISLVTVSWG), and 172–192 (LAGILGVSGVLLFGCVYLLHL). Tyrosine 233 carries the post-translational modification Phosphotyrosine. The disordered stretch occupies residues 296-326 (AGERPPHTGPGLTLFPDPRGPRAMEGPLGVR).

In terms of assembly, interacts with NECTIN2, hence competing with CD226. Expressed in some types of immune cells. Expressed at low levels on the surface of freshly isolated T-cells and natural killer (NK) cells, predominantly on CD8+ T-cells (mainly memory/effector, but not naive cells) and on both CD16+ and CD16- NK cells. T-cell expression levels are variable among individuals. Not detected in B-cells, naive or helper T-cells, monocytes, nor neutrophils (at protein level). Not detected in dendritic cells.

The protein resides in the cell membrane. Functionally, cell surface receptor for NECTIN2. May act as a coinhibitory receptor that suppresses T-cell receptor-mediated signals. Following interaction with NECTIN2, inhibits T-cell proliferation. Competes with CD226 for NECTIN2-binding. This Homo sapiens (Human) protein is Transmembrane protein PVRIG (PVRIG).